A 294-amino-acid chain; its full sequence is Indole-3-glycerol phosphate synthase (294 aa).

The protein belongs to the TrpC family.

It carries out the reaction 1-(2-carboxyphenylamino)-1-deoxy-D-ribulose 5-phosphate + H(+) = (1S,2R)-1-C-(indol-3-yl)glycerol 3-phosphate + CO2 + H2O. Its pathway is amino-acid biosynthesis; L-tryptophan biosynthesis; L-tryptophan from chorismate: step 4/5. The polypeptide is Indole-3-glycerol phosphate synthase (Synechococcus sp. (strain WH7803)).